The sequence spans 275 residues: Anthracycline biosynthesis protein DnrV (275 aa).

VOC domains lie at 8-136 (APAW…VWRK) and 150-263 (SVGW…VVEL).

It functions in the pathway antibiotic biosynthesis; daunorubicin biosynthesis. It participates in antibiotic biosynthesis; carminomycin biosynthesis. In terms of biological role, involved in the biosynthesis of the anthracyclines carminomycin and daunorubicin (daunomycin) which are aromatic polyketide antibiotics that exhibit high cytotoxicity and are widely applied in the chemotherapy of a variety of cancers. In vivo, it acts jointly with DoxA in the conversion of 13-deoxycarminomycin and 13-deoxydaunorubicin to yield carminomycin and daunorubicin, respectively. In vitro, it also acts jointly with DoxA in the C-14 hydroxylation of daunorubicin to form doxorubicin, although this strain is not a doxorubicin producer. This is Anthracycline biosynthesis protein DnrV (dnrV) from Streptomyces peucetius.